Here is a 352-residue protein sequence, read N- to C-terminus: UDP-N-acetylglucosamine--N-acetylmuramyl-(pentapeptide) pyrophosphoryl-undecaprenol N-acetylglucosamine transferase (352 aa).

2 residues coordinate UDP-N-acetyl-alpha-D-glucosamine: serine 195 and glutamine 287.

Belongs to the glycosyltransferase 28 family. MurG subfamily.

It localises to the cell membrane. The enzyme catalyses Mur2Ac(oyl-L-Ala-gamma-D-Glu-L-Lys-D-Ala-D-Ala)-di-trans,octa-cis-undecaprenyl diphosphate + UDP-N-acetyl-alpha-D-glucosamine = beta-D-GlcNAc-(1-&gt;4)-Mur2Ac(oyl-L-Ala-gamma-D-Glu-L-Lys-D-Ala-D-Ala)-di-trans,octa-cis-undecaprenyl diphosphate + UDP + H(+). It functions in the pathway cell wall biogenesis; peptidoglycan biosynthesis. Cell wall formation. Catalyzes the transfer of a GlcNAc subunit on undecaprenyl-pyrophosphoryl-MurNAc-pentapeptide (lipid intermediate I) to form undecaprenyl-pyrophosphoryl-MurNAc-(pentapeptide)GlcNAc (lipid intermediate II). In Streptococcus pneumoniae (strain CGSP14), this protein is UDP-N-acetylglucosamine--N-acetylmuramyl-(pentapeptide) pyrophosphoryl-undecaprenol N-acetylglucosamine transferase.